Here is a 416-residue protein sequence, read N- to C-terminus: UDP-N-acetylglucosamine 1-carboxyvinyltransferase (416 aa).

22 to 23 (KN) is a phosphoenolpyruvate binding site. Arginine 91 contributes to the UDP-N-acetyl-alpha-D-glucosamine binding site. Cysteine 115 serves as the catalytic Proton donor. The residue at position 115 (cysteine 115) is a 2-(S-cysteinyl)pyruvic acid O-phosphothioketal. Residues 120–124 (RPIDL), aspartate 305, and isoleucine 327 contribute to the UDP-N-acetyl-alpha-D-glucosamine site.

It belongs to the EPSP synthase family. MurA subfamily.

The protein localises to the cytoplasm. The enzyme catalyses phosphoenolpyruvate + UDP-N-acetyl-alpha-D-glucosamine = UDP-N-acetyl-3-O-(1-carboxyvinyl)-alpha-D-glucosamine + phosphate. The protein operates within cell wall biogenesis; peptidoglycan biosynthesis. Its function is as follows. Cell wall formation. Adds enolpyruvyl to UDP-N-acetylglucosamine. This is UDP-N-acetylglucosamine 1-carboxyvinyltransferase from Buchnera aphidicola subsp. Acyrthosiphon pisum (strain 5A).